Consider the following 132-residue polypeptide: Fibroblast growth factor 1 (132 aa).

Residues asparagine 10 and 108–120 (KTKPGSRTHFGQK) contribute to the heparin site.

This sequence belongs to the heparin-binding growth factors family.

Its subcellular location is the secreted. The protein localises to the cytoplasm. It localises to the cell cortex. It is found in the cytosol. The protein resides in the nucleus. In terms of biological role, plays an important role in the regulation of cell survival, cell division, angiogenesis, cell differentiation and cell migration. Functions as a potent mitogen in vitro. Acts as a ligand for FGFR1 and integrins. Binds to FGFR1 in the presence of heparin leading to FGFR1 dimerization and activation via sequential autophosphorylation on tyrosine residues which act as docking sites for interacting proteins, leading to the activation of several signaling cascades. Binds to integrins. Its binding to integrins and subsequent ternary complex formation with integrins and FGFR1 are essential for FGF1 signaling. This chain is Fibroblast growth factor 1 (fgf1), found in Notophthalmus viridescens (Eastern newt).